Consider the following 121-residue polypeptide: Protein ripply2.1 (121 aa).

The interval 1–69 is disordered; it reads MEPNQQRSCG…DKGKPPSFQH (69 aa). The WRPW motif signature appears at 29–32; the sequence is WRPW. A compositionally biased stretch (polar residues) spans 39 to 57; it reads HVQNPPTAQQQFYSDNQSH. Residues 69–104 are ripply homology domain; it reads HPVKLFWPKSRCYDFMYQEAEELLRHFPVQATISLY.

The protein belongs to the ripply family. In terms of tissue distribution, expressed in the presomitic mesoderm (PSM) in the anterior halves of somitomeres S-0, S-I and S-II and in the newly formed somites.

It is found in the nucleus. Required during somitogenesis to regulate somite differentiation and the positioning of the presomitic mesoderm-front. Represses the expression of genes involved in somite segmentation by acting with the corepressor tle4 to down-regulate the transcriptional activity of tbx6. Also regulates retinoic acid signaling during somitogenesis and is necessary for the expression of aldh1a2/raldh2. The polypeptide is Protein ripply2.1 (ripply2.1) (Xenopus laevis (African clawed frog)).